We begin with the raw amino-acid sequence, 419 residues long: Tol-Pal system protein TolB (419 aa).

The N-terminal stretch at 1–19 is a signal peptide; the sequence is MFNRIISLFLLLFTGQVIA.

This sequence belongs to the TolB family. As to quaternary structure, the Tol-Pal system is composed of five core proteins: the inner membrane proteins TolA, TolQ and TolR, the periplasmic protein TolB and the outer membrane protein Pal. They form a network linking the inner and outer membranes and the peptidoglycan layer.

The protein localises to the periplasm. Functionally, part of the Tol-Pal system, which plays a role in outer membrane invagination during cell division and is important for maintaining outer membrane integrity. In Legionella pneumophila (strain Corby), this protein is Tol-Pal system protein TolB.